The chain runs to 148 residues: Ubiquitin-conjugating enzyme E2-17 kDa (148 aa).

Residues 1–147 (MASKRILKEL…ARSWTQKYAM (147 aa)) form the UBC core domain. Cysteine 85 serves as the catalytic Glycyl thioester intermediate.

It belongs to the ubiquitin-conjugating enzyme family.

It catalyses the reaction S-ubiquitinyl-[E1 ubiquitin-activating enzyme]-L-cysteine + [E2 ubiquitin-conjugating enzyme]-L-cysteine = [E1 ubiquitin-activating enzyme]-L-cysteine + S-ubiquitinyl-[E2 ubiquitin-conjugating enzyme]-L-cysteine.. It participates in protein modification; protein ubiquitination. Catalyzes the covalent attachment of ubiquitin to other proteins. Mediates the selective degradation of short-lived and abnormal proteins. This is Ubiquitin-conjugating enzyme E2-17 kDa from Solanum lycopersicum (Tomato).